The chain runs to 254 residues: MAREENVYMAKLAEQAERYEEMVQFMEKVSTSLGSEELTVEERNLLSVAYKNVIGARRASWRIISSIEQKEESRGNEEHVKCIKEYRSKIESELSDICDGILKLLDSNLIPSASNGDSKVFYLKMKGDYHRYLAEFKTGAERKEAAESTLSAYKAAQDIANTELAPTHPIRLGLALNFSVFYYEILNSPDRACNLAKQAFDEAIAELDTLGEESYKDSTLIMQLLRDNLTLWTSDMQDDGADEIKETKNDNEQQ.

Belongs to the 14-3-3 family. In terms of assembly, homodimer.

This chain is 14-3-3 protein 2 (TFT2), found in Solanum lycopersicum (Tomato).